Reading from the N-terminus, the 495-residue chain is NADH-ubiquinone oxidoreductase chain 4 (495 aa).

The next 15 helical transmembrane spans lie at 9–29 (YFDLSGLILCPVLGSIILLFI), 39–59 (LIGLCVSLITFLYSLVLWIQF), 89–109 (LSLFFVILTTFLIPICILVGW), 118–138 (EYIIAFLICEFLMIAVFCMLD), 139–159 (LLLFYVFFESVLIPMFIIIGV), 173–193 (FFLYTLLGSVFMLLAILLILL), 214–234 (ILLWIAFFASFAVKVPMVPVH), 245–265 (PTAGSVILAGILLKLGTYGFL), 272–292 (FPEATLCFTPFIYTLSAIAII), 313–333 (VAHMNLVTIGMFSLNIQGIGG), 335–355 (ILLMLSHGLVSSALFLCVGVL), 367–387 (YGGLVSTMPNFSTIFFFFTLA), 388–408 (NMSLPGTSSFIGEFLILVGAF), 413–433 (LVATLRALGMILGAAYSLWLY), and 457–477 (VFIFLPFLVGVVWMGVYPKVF).

The protein belongs to the complex I subunit 4 family.

The protein localises to the mitochondrion membrane. It catalyses the reaction a ubiquinone + NADH + 5 H(+)(in) = a ubiquinol + NAD(+) + 4 H(+)(out). Core subunit of the mitochondrial membrane respiratory chain NADH dehydrogenase (Complex I) that is believed to belong to the minimal assembly required for catalysis. Complex I functions in the transfer of electrons from NADH to the respiratory chain. The immediate electron acceptor for the enzyme is believed to be ubiquinone. The chain is NADH-ubiquinone oxidoreductase chain 4 (ND4) from Triticum aestivum (Wheat).